Here is a 560-residue protein sequence, read N- to C-terminus: Putative ABC transporter ATP-binding protein SP_0483 (560 aa).

ABC transporter domains follow at residues 6–247 and 297–528; these read IEWK…GIRE and FRLE…ANLK. ATP is bound by residues 40-47 and 329-336; these read GPSGSGKS and GKNGAGKS.

Belongs to the ABC transporter superfamily.

The protein resides in the cell membrane. Its function is as follows. Probably part of an ABC transporter complex. Responsible for energy coupling to the transport system. This Streptococcus pneumoniae serotype 4 (strain ATCC BAA-334 / TIGR4) protein is Putative ABC transporter ATP-binding protein SP_0483.